We begin with the raw amino-acid sequence, 315 residues long: 3-oxoacyl-[acyl-carrier-protein] reductase 3, chloroplastic (315 aa).

The N-terminal 55 residues, 1–55 (MATTVAATKLTSLKAVKKLGFREIRQVRQWTPLQSSMPHFGSRQSFATSTVVKAQ), are a transit peptide targeting the chloroplast. Residue 77 to 101 (VTGASRGIGKAIALSLGKAGCKVLV) participates in NADP(+) binding. S209 serves as a coordination point for substrate. Y222 serves as the catalytic Proton acceptor.

It belongs to the short-chain dehydrogenases/reductases (SDR) family. In terms of assembly, homotetramer.

It localises to the plastid. It is found in the chloroplast. It carries out the reaction a (3R)-hydroxyacyl-[ACP] + NADP(+) = a 3-oxoacyl-[ACP] + NADPH + H(+). The protein operates within lipid metabolism; fatty acid biosynthesis. The polypeptide is 3-oxoacyl-[acyl-carrier-protein] reductase 3, chloroplastic (bkr3) (Brassica napus (Rape)).